A 373-amino-acid chain; its full sequence is Securin (373 aa).

The segment covering 1 to 10 (MMPANEDKEN) has biased composition (basic and acidic residues). The disordered stretch occupies residues 1–27 (MMPANEDKENNIVYTGNESSGINFPQT). Residues 12–26 (IVYTGNESSGINFPQ) show a composition bias toward polar residues. Positions 85-88 (RLPL) match the D-box motif. The segment at 177–278 (ADSGKNEESS…LPYVPEGYSP (102 aa)) is disordered. Phosphoserine occurs at positions 185, 186, 212, and 213. A compositionally biased stretch (acidic residues) spans 185–194 (SSDDDEGNED). Over residues 225 to 235 (LFNEQGGLQQL) the composition is skewed to low complexity. Residues 240 to 256 (TKNEQKTKNDKSDKTDD) are compositionally biased toward basic and acidic residues. At Ser277 the chain carries Phosphoserine. Ser292 is modified (phosphoserine; by CDC28).

It belongs to the securin family. In terms of assembly, interacts with the caspase-like ESP1, and prevents its protease activity probably by covering its active site. Interacts with CDC20. Post-translationally, phosphorylated by CDC28. The phosphorylation may be important for ESP1 localization to the nucleus. Ubiquitinated by the anaphase promoting complex (APC) at the onset of anaphase, conducting to its degradation.

It is found in the cytoplasm. The protein resides in the nucleus. Its function is as follows. Regulatory protein, which plays a central role in chromosome stability. Probably acts by blocking the action of key proteins. During the mitosis, it blocks Separase/ESP1 function, preventing the proteolysis of the cohesin complex and the subsequent segregation of the chromosomes. At the onset of anaphase, it is ubiquitinated, conducting to its destruction and to the liberation of ESP1. This chain is Securin (PDS1), found in Saccharomyces cerevisiae (strain ATCC 204508 / S288c) (Baker's yeast).